The sequence spans 564 residues: Dihydroxy-acid dehydratase (564 aa).

Cysteine 55 is a binding site for [2Fe-2S] cluster. Position 87 (aspartate 87) interacts with Mg(2+). Cysteine 128 is a binding site for [2Fe-2S] cluster. Positions 129 and 130 each coordinate Mg(2+). Lysine 130 is subject to N6-carboxylysine. Cysteine 200 contributes to the [2Fe-2S] cluster binding site. Residue glutamate 452 coordinates Mg(2+). The active-site Proton acceptor is the serine 478.

It belongs to the IlvD/Edd family. Homodimer. It depends on [2Fe-2S] cluster as a cofactor. Mg(2+) is required as a cofactor.

It carries out the reaction (2R)-2,3-dihydroxy-3-methylbutanoate = 3-methyl-2-oxobutanoate + H2O. It catalyses the reaction (2R,3R)-2,3-dihydroxy-3-methylpentanoate = (S)-3-methyl-2-oxopentanoate + H2O. The protein operates within amino-acid biosynthesis; L-isoleucine biosynthesis; L-isoleucine from 2-oxobutanoate: step 3/4. It functions in the pathway amino-acid biosynthesis; L-valine biosynthesis; L-valine from pyruvate: step 3/4. Functions in the biosynthesis of branched-chain amino acids. Catalyzes the dehydration of (2R,3R)-2,3-dihydroxy-3-methylpentanoate (2,3-dihydroxy-3-methylvalerate) into 2-oxo-3-methylpentanoate (2-oxo-3-methylvalerate) and of (2R)-2,3-dihydroxy-3-methylbutanoate (2,3-dihydroxyisovalerate) into 2-oxo-3-methylbutanoate (2-oxoisovalerate), the penultimate precursor to L-isoleucine and L-valine, respectively. This chain is Dihydroxy-acid dehydratase, found in Polaromonas sp. (strain JS666 / ATCC BAA-500).